Reading from the N-terminus, the 147-residue chain is MEIILKEDVVNLGYKNDIVTVKSGYGRNYLIPTGKAVIASPSAKKMLAEELKQRAHKLEKIKKDAEALAAKLEGVSLTIATKVSSTGTIFGSVGNIQIAEELAKLGHEIDRKIIVVKDAVKEVGAYKAIVKLHKEVSVEIPFEVVAE.

Belongs to the bacterial ribosomal protein bL9 family.

Functionally, binds to the 23S rRNA. The sequence is that of Large ribosomal subunit protein bL9 from Bacteroides fragilis (strain ATCC 25285 / DSM 2151 / CCUG 4856 / JCM 11019 / LMG 10263 / NCTC 9343 / Onslow / VPI 2553 / EN-2).